Here is a 548-residue protein sequence, read N- to C-terminus: T-complex protein 1 subunit theta (548 aa).

Residue Ala-2 is modified to N-acetylalanine. Ser-23 is modified (phosphoserine). The residue at position 30 (Tyr-30) is a Phosphotyrosine. ADP contacts are provided by Tyr-47 and Gly-48. A Mg(2+)-binding site is contributed by Asp-99. The ADP site is built by Gly-100, Thr-101, Asn-102, and Phe-103. Residues Gly-100, Thr-101, and Asn-102 each coordinate ATP. A Phosphoserine modification is found at Ser-162. ADP contacts are provided by Met-169, Ser-170, and Lys-171. Residues Ser-170 and Lys-171 each coordinate ATP. Residues Lys-224, Lys-254, and Lys-260 each participate in a glycyl lysine isopeptide (Lys-Gly) (interchain with G-Cter in SUMO2) cross-link. A phosphoserine mark is found at Ser-269 and Ser-317. Residues Lys-318 and Lys-400 each carry the N6-acetyllysine modification. Residue Gly-412 participates in ADP binding. Residue Gly-412 participates in ATP binding. Lys-459 is covalently cross-linked (Glycyl lysine isopeptide (Lys-Gly) (interchain with G-Cter in SUMO1)). Lys-466 is subject to N6-acetyllysine. Asp-499 serves as a coordination point for ADP. ATP is bound by residues Asp-499 and Lys-504. Tyr-505 carries the post-translational modification Phosphotyrosine. Positions 529–548 (PAGGPKPPSGKKDWDEDQND) are disordered. Residue Lys-534 forms a Glycyl lysine isopeptide (Lys-Gly) (interchain with G-Cter in SUMO2) linkage. Position 537 is a phosphoserine (Ser-537). Lys-539 is covalently cross-linked (Glycyl lysine isopeptide (Lys-Gly) (interchain with G-Cter in SUMO2)).

The protein belongs to the TCP-1 chaperonin family. Component of the chaperonin-containing T-complex (TRiC), a hexadecamer composed of two identical back-to-back stacked rings enclosing a protein folding chamber. Each ring is made up of eight different subunits: TCP1/CCT1, CCT2, CCT3, CCT4, CCT5, CCT6A/CCT6, CCT7, CCT8. Interacts with PACRG. Interacts with DNAAF4. Interacts with synaptic plasticity regulator PANTS.

It localises to the cytoplasm. The protein localises to the cytoskeleton. It is found in the microtubule organizing center. The protein resides in the centrosome. Its subcellular location is the cilium basal body. The enzyme catalyses ATP + H2O = ADP + phosphate + H(+). Component of the chaperonin-containing T-complex (TRiC), a molecular chaperone complex that assists the folding of actin, tubulin and other proteins upon ATP hydrolysis. The TRiC complex mediates the folding of WRAP53/TCAB1, thereby regulating telomere maintenance. As part of the TRiC complex may play a role in the assembly of BBSome, a complex involved in ciliogenesis regulating transports vesicles to the cilia. This Bos taurus (Bovine) protein is T-complex protein 1 subunit theta (CCT8).